We begin with the raw amino-acid sequence, 344 residues long: N-acetyl-gamma-glutamyl-phosphate reductase (344 aa).

The active site involves Cys150.

It belongs to the NAGSA dehydrogenase family. Type 1 subfamily.

It localises to the cytoplasm. The catalysed reaction is N-acetyl-L-glutamate 5-semialdehyde + phosphate + NADP(+) = N-acetyl-L-glutamyl 5-phosphate + NADPH + H(+). The protein operates within amino-acid biosynthesis; L-arginine biosynthesis; N(2)-acetyl-L-ornithine from L-glutamate: step 3/4. Catalyzes the NADPH-dependent reduction of N-acetyl-5-glutamyl phosphate to yield N-acetyl-L-glutamate 5-semialdehyde. The polypeptide is N-acetyl-gamma-glutamyl-phosphate reductase (Pseudomonas savastanoi pv. phaseolicola (strain 1448A / Race 6) (Pseudomonas syringae pv. phaseolicola (strain 1448A / Race 6))).